A 98-amino-acid chain; its full sequence is Small ribosomal subunit protein bS6c (98 aa).

Belongs to the bacterial ribosomal protein bS6 family.

Its subcellular location is the plastid. The protein resides in the chloroplast. Binds together with bS18 to 16S ribosomal RNA. The sequence is that of Small ribosomal subunit protein bS6c from Phaeodactylum tricornutum (strain CCAP 1055/1).